The sequence spans 559 residues: Potassium-transporting ATPase potassium-binding subunit (559 aa).

13 helical membrane-spanning segments follow: residues Gly5–Ser25, Leu27–Trp47, Leu63–Trp83, Gly132–Ile152, Leu170–Ile190, Leu253–Ala273, Leu283–Val303, Phe327–Val347, Ala356–Val376, Gly379–Gly399, Met416–Met436, Leu484–Ala504, and Gly524–Ile544.

It belongs to the KdpA family. In terms of assembly, the system is composed of three essential subunits: KdpA, KdpB and KdpC.

The protein resides in the cell inner membrane. In terms of biological role, part of the high-affinity ATP-driven potassium transport (or Kdp) system, which catalyzes the hydrolysis of ATP coupled with the electrogenic transport of potassium into the cytoplasm. This subunit binds the periplasmic potassium ions and delivers the ions to the membrane domain of KdpB through an intramembrane tunnel. This chain is Potassium-transporting ATPase potassium-binding subunit, found in Salmonella enteritidis PT4 (strain P125109).